A 143-amino-acid chain; its full sequence is D-aminoacyl-tRNA deacylase (143 aa).

Positions 135-136 (GP) match the Gly-cisPro motif, important for rejection of L-amino acids motif.

The protein belongs to the DTD family. Homodimer.

The protein localises to the cytoplasm. The catalysed reaction is glycyl-tRNA(Ala) + H2O = tRNA(Ala) + glycine + H(+). It catalyses the reaction a D-aminoacyl-tRNA + H2O = a tRNA + a D-alpha-amino acid + H(+). Functionally, an aminoacyl-tRNA editing enzyme that deacylates mischarged D-aminoacyl-tRNAs. Also deacylates mischarged glycyl-tRNA(Ala), protecting cells against glycine mischarging by AlaRS. Acts via tRNA-based rather than protein-based catalysis; rejects L-amino acids rather than detecting D-amino acids in the active site. By recycling D-aminoacyl-tRNA to D-amino acids and free tRNA molecules, this enzyme counteracts the toxicity associated with the formation of D-aminoacyl-tRNA entities in vivo and helps enforce protein L-homochirality. This Mycolicibacterium paratuberculosis (strain ATCC BAA-968 / K-10) (Mycobacterium paratuberculosis) protein is D-aminoacyl-tRNA deacylase.